Reading from the N-terminus, the 99-residue chain is CTP synthase (99 aa).

One can recognise a Glutamine amidotransferase type-1 domain in the interval 1 to 99; the sequence is TMVTKLEKDS…FIKAIIENNK (99 aa). Arginine 28 lines the L-glutamine pocket. Residues histidine 73 and glutamate 75 contribute to the active site.

Belongs to the CTP synthase family. In terms of assembly, homotetramer.

It catalyses the reaction UTP + L-glutamine + ATP + H2O = CTP + L-glutamate + ADP + phosphate + 2 H(+). The catalysed reaction is L-glutamine + H2O = L-glutamate + NH4(+). It carries out the reaction UTP + NH4(+) + ATP = CTP + ADP + phosphate + 2 H(+). It functions in the pathway pyrimidine metabolism; CTP biosynthesis via de novo pathway; CTP from UDP: step 2/2. Allosterically activated by GTP, when glutamine is the substrate; GTP has no effect on the reaction when ammonia is the substrate. The allosteric effector GTP functions by stabilizing the protein conformation that binds the tetrahedral intermediate(s) formed during glutamine hydrolysis. Inhibited by the product CTP, via allosteric rather than competitive inhibition. Catalyzes the ATP-dependent amination of UTP to CTP with either L-glutamine or ammonia as the source of nitrogen. Regulates intracellular CTP levels through interactions with the four ribonucleotide triphosphates. This chain is CTP synthase, found in Mycoplasma capricolum subsp. capripneumoniae.